The chain runs to 369 residues: Anhydro-N-acetylmuramic acid kinase (369 aa).

12–19 contributes to the ATP binding site; that stretch reads GTSLDGVD.

Belongs to the anhydro-N-acetylmuramic acid kinase family.

It catalyses the reaction 1,6-anhydro-N-acetyl-beta-muramate + ATP + H2O = N-acetyl-D-muramate 6-phosphate + ADP + H(+). It participates in amino-sugar metabolism; 1,6-anhydro-N-acetylmuramate degradation. The protein operates within cell wall biogenesis; peptidoglycan recycling. Catalyzes the specific phosphorylation of 1,6-anhydro-N-acetylmuramic acid (anhMurNAc) with the simultaneous cleavage of the 1,6-anhydro ring, generating MurNAc-6-P. Is required for the utilization of anhMurNAc either imported from the medium or derived from its own cell wall murein, and thus plays a role in cell wall recycling. This is Anhydro-N-acetylmuramic acid kinase from Escherichia coli O8 (strain IAI1).